A 286-amino-acid polypeptide reads, in one-letter code: MTFSQIILTLQNYWQEQGCVILQPYDMPAGAGTYHQATFLRSLGPKPWATAYVAPSRRPTDGRYGENPNRLGAYYQFQVLIKPSPENIQELYLKSLERLGLNLKNHDIRFVEDNWESPTLGAWGLGWEVWLDGMEVTQFTYFQQVGGIACELISGEITYGLERLAMYLQDVNSVYDIVWDDSNGSIVTYADVHKQGEYEWSKYNFEVANVDMLFNQFENAFNECKRCLEAKISLPAYDYCMLAAHTFNVLDARGAISVTQRQDYILKIRELAKECALTYKESLEQK.

It belongs to the class-II aminoacyl-tRNA synthetase family. In terms of assembly, tetramer of two alpha and two beta subunits.

Its subcellular location is the cytoplasm. The catalysed reaction is tRNA(Gly) + glycine + ATP = glycyl-tRNA(Gly) + AMP + diphosphate. The protein is Glycine--tRNA ligase alpha subunit of Campylobacter concisus (strain 13826).